We begin with the raw amino-acid sequence, 341 residues long: Protein pelota homolog (341 aa).

This sequence belongs to the eukaryotic release factor 1 family. Pelota subfamily. In terms of assembly, monomer. Requires a divalent metal cation as cofactor.

It localises to the cytoplasm. In terms of biological role, may function in recognizing stalled ribosomes, interact with stem-loop structures in stalled mRNA molecules, and effect endonucleolytic cleavage of the mRNA. May play a role in the release non-functional ribosomes and degradation of damaged mRNAs. Has endoribonuclease activity. The chain is Protein pelota homolog from Methanospirillum hungatei JF-1 (strain ATCC 27890 / DSM 864 / NBRC 100397 / JF-1).